We begin with the raw amino-acid sequence, 357 residues long: Arginine kinase Met e 2 (357 aa).

Positions 9–91 (KLEAGFKKLE…FDPIIEDYHV (83 aa)) constitute a Phosphagen kinase N-terminal domain. L-arginine is bound at residue 64 to 68 (GVGIY). A Phosphagen kinase C-terminal domain is found at 119–356 (FVISTRVRCG…LELIKIEKEM (238 aa)). ATP is bound by residues 122 to 126 (STRVR) and H185. L-arginine is bound at residue E225. Residue R229 coordinates ATP. Residue C271 coordinates L-arginine. Residues 280-284 (RASVH) and 309-314 (RGTRGE) contribute to the ATP site. E314 contributes to the L-arginine binding site.

Belongs to the ATP:guanido phosphotransferase family.

The enzyme catalyses L-arginine + ATP = N(omega)-phospho-L-arginine + ADP + H(+). Functionally, catalyzes the reversible transfer of high energy ATP gamma-phosphate group to L-arginine. The sequence is that of Arginine kinase Met e 2 from Metapenaeus ensis (Greasyback shrimp).